The chain runs to 490 residues: MFSFDALLQAIARQTVLCVGDLMLDEFVYGEVSRISPEAPAPVIAVQRSETNIGGAGNVARNIAAIGARCIFVGLIGDDATGRFLESELGSESRIEPVLVCDGSRPTTRKVRFVSEHFSTHMLRADWETASPAAADIEQRLLDAILPQLARADIVLLSDYAKGVLTARVIRDTIDAAKKLGKRVIVDPKSANFAIYRGATLLTPNRKEFTAATRSAAATDDEIAAAAQDAMALAECEAMLVTKSEHGMTLVPRGGEPIHVPALPVKVRDVSGAGDTVAAVLAVVLASGANWAAAMRAASAAAAVAVSKNGTAVVTPAELRRRILPHASLAAEEKIIGSDAELDERLKQWRREGLRVGFTNGCFDILHPGHVKVLTAARGACDRLIVGLNSDASVRRLKGESRPVQHERARAEVLAALEAVDLVAIFEEDTPLRLITRIEPSVLVKGGDYTREQVVGHEIVAAKGGDVLLVDVLPGFSTTSLVARAREGQS.

The segment at 1-328 (MFSFDALLQA…LRRRILPHAS (328 aa)) is ribokinase. Residue 205-208 (NRKE) participates in ATP binding. D275 is an active-site residue. Residues 358 to 490 (FTNGCFDILH…LVARAREGQS (133 aa)) are cytidylyltransferase.

The protein in the N-terminal section; belongs to the carbohydrate kinase PfkB family. It in the C-terminal section; belongs to the cytidylyltransferase family. Homodimer.

It catalyses the reaction D-glycero-beta-D-manno-heptose 7-phosphate + ATP = D-glycero-beta-D-manno-heptose 1,7-bisphosphate + ADP + H(+). The enzyme catalyses D-glycero-beta-D-manno-heptose 1-phosphate + ATP + H(+) = ADP-D-glycero-beta-D-manno-heptose + diphosphate. It participates in nucleotide-sugar biosynthesis; ADP-L-glycero-beta-D-manno-heptose biosynthesis; ADP-L-glycero-beta-D-manno-heptose from D-glycero-beta-D-manno-heptose 7-phosphate: step 1/4. Its pathway is nucleotide-sugar biosynthesis; ADP-L-glycero-beta-D-manno-heptose biosynthesis; ADP-L-glycero-beta-D-manno-heptose from D-glycero-beta-D-manno-heptose 7-phosphate: step 3/4. Its function is as follows. Catalyzes the phosphorylation of D-glycero-D-manno-heptose 7-phosphate at the C-1 position to selectively form D-glycero-beta-D-manno-heptose-1,7-bisphosphate. In terms of biological role, catalyzes the ADP transfer from ATP to D-glycero-beta-D-manno-heptose 1-phosphate, yielding ADP-D-glycero-beta-D-manno-heptose. The sequence is that of Bifunctional protein HldE from Rhodopseudomonas palustris (strain TIE-1).